Reading from the N-terminus, the 457-residue chain is Exodeoxyribonuclease 7 large subunit (457 aa).

It belongs to the XseA family. As to quaternary structure, heterooligomer composed of large and small subunits.

It is found in the cytoplasm. The enzyme catalyses Exonucleolytic cleavage in either 5'- to 3'- or 3'- to 5'-direction to yield nucleoside 5'-phosphates.. Its function is as follows. Bidirectionally degrades single-stranded DNA into large acid-insoluble oligonucleotides, which are then degraded further into small acid-soluble oligonucleotides. In Cronobacter sakazakii (strain ATCC BAA-894) (Enterobacter sakazakii), this protein is Exodeoxyribonuclease 7 large subunit.